The primary structure comprises 205 residues: Small ribosomal subunit protein uS4 (205 aa).

The segment covering 1–12 (MSKRIQAKHKLD) has biased composition (basic residues). Residues 1 to 49 (MSKRIQAKHKLDRRMGQNIWGRPKSPVNRREYGPGQHGQRRKGKMSDFG) form a disordered region. One can recognise an S4 RNA-binding domain in the interval 94–155 (RRLDAVVYRA…SSRQLEIVIV (62 aa)).

Belongs to the universal ribosomal protein uS4 family. Part of the 30S ribosomal subunit. Contacts protein S5. The interaction surface between S4 and S5 is involved in control of translational fidelity.

Its function is as follows. One of the primary rRNA binding proteins, it binds directly to 16S rRNA where it nucleates assembly of the body of the 30S subunit. With S5 and S12 plays an important role in translational accuracy. The polypeptide is Small ribosomal subunit protein uS4 (Methylobacterium radiotolerans (strain ATCC 27329 / DSM 1819 / JCM 2831 / NBRC 15690 / NCIMB 10815 / 0-1)).